A 112-amino-acid polypeptide reads, in one-letter code: Small ribosomal subunit protein uS17 (112 aa).

This sequence belongs to the universal ribosomal protein uS17 family. Part of the 30S ribosomal subunit.

Its function is as follows. One of the primary rRNA binding proteins, it binds specifically to the 5'-end of 16S ribosomal RNA. The polypeptide is Small ribosomal subunit protein uS17 (Thermotoga neapolitana (strain ATCC 49049 / DSM 4359 / NBRC 107923 / NS-E)).